We begin with the raw amino-acid sequence, 102 residues long: Large ribosomal subunit protein eL30 (102 aa).

This sequence belongs to the eukaryotic ribosomal protein eL30 family. As to quaternary structure, part of the 50S ribosomal subunit.

In Thermococcus kodakarensis (strain ATCC BAA-918 / JCM 12380 / KOD1) (Pyrococcus kodakaraensis (strain KOD1)), this protein is Large ribosomal subunit protein eL30.